The chain runs to 336 residues: 4-hydroxy-3-methylbut-2-enyl diphosphate reductase (336 aa).

Cysteine 37 is a [4Fe-4S] cluster binding site. Positions 66 and 99 each coordinate (2E)-4-hydroxy-3-methylbut-2-enyl diphosphate. Residues histidine 66 and histidine 99 each coordinate dimethylallyl diphosphate. 2 residues coordinate isopentenyl diphosphate: histidine 66 and histidine 99. A [4Fe-4S] cluster-binding site is contributed by cysteine 121. Histidine 149 is a (2E)-4-hydroxy-3-methylbut-2-enyl diphosphate binding site. Histidine 149 provides a ligand contact to dimethylallyl diphosphate. Isopentenyl diphosphate is bound at residue histidine 149. The active-site Proton donor is glutamate 151. Threonine 189 is a binding site for (2E)-4-hydroxy-3-methylbut-2-enyl diphosphate. Cysteine 219 is a [4Fe-4S] cluster binding site. Serine 247, serine 248, asparagine 249, and serine 292 together coordinate (2E)-4-hydroxy-3-methylbut-2-enyl diphosphate. Residues serine 247, serine 248, asparagine 249, and serine 292 each contribute to the dimethylallyl diphosphate site. Isopentenyl diphosphate-binding residues include serine 247, serine 248, asparagine 249, and serine 292.

The protein belongs to the IspH family. Requires [4Fe-4S] cluster as cofactor.

The catalysed reaction is isopentenyl diphosphate + 2 oxidized [2Fe-2S]-[ferredoxin] + H2O = (2E)-4-hydroxy-3-methylbut-2-enyl diphosphate + 2 reduced [2Fe-2S]-[ferredoxin] + 2 H(+). It carries out the reaction dimethylallyl diphosphate + 2 oxidized [2Fe-2S]-[ferredoxin] + H2O = (2E)-4-hydroxy-3-methylbut-2-enyl diphosphate + 2 reduced [2Fe-2S]-[ferredoxin] + 2 H(+). It participates in isoprenoid biosynthesis; dimethylallyl diphosphate biosynthesis; dimethylallyl diphosphate from (2E)-4-hydroxy-3-methylbutenyl diphosphate: step 1/1. The protein operates within isoprenoid biosynthesis; isopentenyl diphosphate biosynthesis via DXP pathway; isopentenyl diphosphate from 1-deoxy-D-xylulose 5-phosphate: step 6/6. Catalyzes the conversion of 1-hydroxy-2-methyl-2-(E)-butenyl 4-diphosphate (HMBPP) into a mixture of isopentenyl diphosphate (IPP) and dimethylallyl diphosphate (DMAPP). Acts in the terminal step of the DOXP/MEP pathway for isoprenoid precursor biosynthesis. The polypeptide is 4-hydroxy-3-methylbut-2-enyl diphosphate reductase (Nocardia farcinica (strain IFM 10152)).